The sequence spans 506 residues: MKQILFMDTTLRDGEQSPGVNLNEQEKLQIARQLERLGIHVMEAGFAAASEGDFQSVKRIANTIQNATVMSLARAKESDIRRAYEAVKGAVSPRLHVFLATSDIHMKYKLCMSKEDVLDSIHRSVTLGKSLFPTVQFSAEDATRTARDFLAEAVEVAIRAGANVINIPDTVGYTNPEEYYSLFKYLQESVPSYEKAIFSCHCHDDLGMAVANSLAAVEGGALQVEGTINGIGERAGNAALEEVAVALHIRKDFYQAEPSMTLKEIKATSTLVSRLTGMVVPKNKAIVGANAFAHESGIHQDGVLKEVTTYEIIEPELVGESQNLFVLGKHSGRHAFTEKMKELGYEFTTEERDAVFEAFKKLADRKKEITEEDLRALMLGEAAFAAQQYNITQLQVHFVSNSTQCATVVLKDEEGNVFEDAATGSGSIEAIYNAIQRILGLECELADYRIQSITQGQDALAHVHVELKEGTHQVSGFGVAQDVLEASARAYVHAAGKLKSFIQLVK.

In terms of domain architecture, Pyruvate carboxyltransferase spans 4-266; sequence ILFMDTTLRD…EPSMTLKEIK (263 aa). Residues D13, H201, H203, and N237 each contribute to the Mn(2+) site. Residues 390–506 are regulatory domain; sequence NITQLQVHFV…KLKSFIQLVK (117 aa).

This sequence belongs to the alpha-IPM synthase/homocitrate synthase family. LeuA type 1 subfamily. In terms of assembly, homodimer. It depends on Mn(2+) as a cofactor.

The protein resides in the cytoplasm. The enzyme catalyses 3-methyl-2-oxobutanoate + acetyl-CoA + H2O = (2S)-2-isopropylmalate + CoA + H(+). It functions in the pathway amino-acid biosynthesis; L-leucine biosynthesis; L-leucine from 3-methyl-2-oxobutanoate: step 1/4. In terms of biological role, catalyzes the condensation of the acetyl group of acetyl-CoA with 3-methyl-2-oxobutanoate (2-ketoisovalerate) to form 3-carboxy-3-hydroxy-4-methylpentanoate (2-isopropylmalate). This Bacillus cereus (strain ATCC 10987 / NRS 248) protein is 2-isopropylmalate synthase.